The chain runs to 245 residues: Thiopurine S-methyltransferase (245 aa).

An S-adenosyl-L-methionine-binding site is contributed by 29–40; that stretch reads WREKWVDGKIGF. Substrate is bound at residue F40. N6-acetyllysine is present on K58. Residues L69, E90, and R152 each coordinate S-adenosyl-L-methionine.

It belongs to the class I-like SAM-binding methyltransferase superfamily. TPMT family. In terms of assembly, monomer.

It is found in the cytoplasm. The catalysed reaction is S-adenosyl-L-methionine + a thiopurine = S-adenosyl-L-homocysteine + a thiopurine S-methylether.. In Panthera pardus (Leopard), this protein is Thiopurine S-methyltransferase (TPMT).